We begin with the raw amino-acid sequence, 477 residues long: ATP synthase subunit beta (477 aa).

ATP is bound at residue 148 to 155 (GGAGVGKT).

It belongs to the ATPase alpha/beta chains family. As to quaternary structure, F-type ATPases have 2 components, CF(1) - the catalytic core - and CF(0) - the membrane proton channel. CF(1) has five subunits: alpha(3), beta(3), gamma(1), delta(1), epsilon(1). CF(0) has three main subunits: a(1), b(2) and c(9-12). The alpha and beta chains form an alternating ring which encloses part of the gamma chain. CF(1) is attached to CF(0) by a central stalk formed by the gamma and epsilon chains, while a peripheral stalk is formed by the delta and b chains.

The protein localises to the cell inner membrane. The enzyme catalyses ATP + H2O + 4 H(+)(in) = ADP + phosphate + 5 H(+)(out). Functionally, produces ATP from ADP in the presence of a proton gradient across the membrane. The catalytic sites are hosted primarily by the beta subunits. This is ATP synthase subunit beta from Psychrobacter cryohalolentis (strain ATCC BAA-1226 / DSM 17306 / VKM B-2378 / K5).